The chain runs to 206 residues: Ion-translocating oxidoreductase complex subunit G (206 aa).

Residues 9-29 traverse the membrane as a helical segment; sequence GITLALFAAGSTGLTAVINQM. T174 bears the FMN phosphoryl threonine mark.

This sequence belongs to the RnfG family. The complex is composed of six subunits: RsxA, RsxB, RsxC, RsxD, RsxE and RsxG. FMN is required as a cofactor.

The protein localises to the cell inner membrane. Functionally, part of a membrane-bound complex that couples electron transfer with translocation of ions across the membrane. Required to maintain the reduced state of SoxR. In Salmonella typhimurium (strain LT2 / SGSC1412 / ATCC 700720), this protein is Ion-translocating oxidoreductase complex subunit G.